We begin with the raw amino-acid sequence, 470 residues long: Zinc finger and BTB domain-containing protein 8A.1-A (470 aa).

The BTB domain maps to 24 to 92 (CDCHIIVEGQ…VYSGKLPLSG (69 aa)). Residues 260-280 (EDEDAASHSWPESPQQESLDQ) are disordered. Polar residues predominate over residues 269–278 (WPESPQQESL). 2 C2H2-type zinc fingers span residues 316–338 (FKCPFCTHTVKRKADLKRHLRCH) and 344–367 (YPCEACGKRFTRLEHLRNHFQTIH). Positions 439–450 (GRKENGSERAES) are enriched in basic and acidic residues. Positions 439–470 (GRKENGSERAESDLAIQEVVDSEDDELKEKQD) are disordered.

It localises to the nucleus. May be involved in transcriptional regulation. This Xenopus laevis (African clawed frog) protein is Zinc finger and BTB domain-containing protein 8A.1-A (zbtb8a.1-a).